The following is a 371-amino-acid chain: MLNQHTLLISNLLPVGSNISTWWNFGSLLLTCLMLQILTGFFLAIHYTANINLAFSSVIHITRDVPYGWIMQNTHAIGASLFFICIYTHIARGLYYGSYLNKSVWLSGTTLLIILMATAFFGYVLPWGQMSFWAATVITNLLTAIPYLGTTVTTWLWGGFSINDPTLTRFFALHFILPFIIISMSSIHIILLHNEGSNNPLGTNSDIDKIPFHPYHLYKDMTMVSIMIMLLLMVMTFAPNLFNDPENFSKANPLVTPQHIKPEWYFLFAYGILRSIPNKLGGTLALFLSIIILTTTPFTHTSYIQSMAFRPLTQILFWTLIATFTTITWTATKPVETPFIYISQMTSIMYFSFFIMNPLLGWAENKIMMNM.

4 helical membrane-spanning segments follow: residues 25–45 (FGSLLLTCLMLQILTGFFLAI), 69–90 (WIMQNTHAIGASLFFICIYTHI), 105–125 (WLSGTTLLIILMATAFFGYVL), and 170–190 (FFALHFILPFIIISMSSIHII). Residues His-75 and His-89 each coordinate heme b. His-174 and His-188 together coordinate heme b. Residue His-193 participates in a ubiquinone binding. A run of 4 helical transmembrane segments spans residues 218-238 (YKDMTMVSIMIMLLLMVMTFA), 280-300 (LGGTLALFLSIIILTTTPFTH), 312-332 (LTQILFWTLIATFTTITWTAT), and 339-358 (FIYISQMTSIMYFSFFIMNP).

The protein belongs to the cytochrome b family. In terms of assembly, the cytochrome bc1 complex contains 3 respiratory subunits (MT-CYB, CYC1 and UQCRFS1), 2 core proteins (UQCRC1 and UQCRC2) and probably 6 low-molecular weight proteins. Heme b is required as a cofactor.

The protein resides in the mitochondrion inner membrane. Its function is as follows. Component of the ubiquinol-cytochrome c reductase complex (complex III or cytochrome b-c1 complex) that is part of the mitochondrial respiratory chain. The b-c1 complex mediates electron transfer from ubiquinol to cytochrome c. Contributes to the generation of a proton gradient across the mitochondrial membrane that is then used for ATP synthesis. This is Cytochrome b (MT-CYB) from Micruroides euryxanthus (Sonoran coral snake).